The primary structure comprises 31 residues: Cytochrome b6-f complex subunit 6 (31 aa).

Residues 4-24 traverse the membrane as a helical segment; it reads ITSFFGFLLAALTITSVLFIG.

The protein belongs to the PetL family. As to quaternary structure, the 4 large subunits of the cytochrome b6-f complex are cytochrome b6, subunit IV (17 kDa polypeptide, PetD), cytochrome f and the Rieske protein, while the 4 small subunits are PetG, PetL, PetM and PetN. The complex functions as a dimer.

It localises to the plastid. Its subcellular location is the chloroplast thylakoid membrane. Functionally, component of the cytochrome b6-f complex, which mediates electron transfer between photosystem II (PSII) and photosystem I (PSI), cyclic electron flow around PSI, and state transitions. PetL is important for photoautotrophic growth as well as for electron transfer efficiency and stability of the cytochrome b6-f complex. This Oenothera elata subsp. hookeri (Hooker's evening primrose) protein is Cytochrome b6-f complex subunit 6.